Consider the following 413-residue polypeptide: F-box/kelch-repeat protein At5g26960 (413 aa).

An F-box domain is found at 41 to 90 (SATIASLPDDLLLECISRVPSSSIPSLAVVCRRWSRLLHSPYFLHLRRRL). Kelch repeat units lie at residues 96–141 (SLFA…YGSL), 152–191 (RVYV…VVSG), 192–238 (KIYV…AVDG), 240–295 (FYVI…AAVG), and 367–413 (LLRR…CVEW).

This chain is F-box/kelch-repeat protein At5g26960, found in Arabidopsis thaliana (Mouse-ear cress).